The chain runs to 82 residues: Acyl carrier protein (82 aa).

Positions 4–79 (PEMEERLRKI…DALNYLETHQ (76 aa)) constitute a Carrier domain. Ser-39 is subject to O-(pantetheine 4'-phosphoryl)serine.

Belongs to the acyl carrier protein (ACP) family. 4'-phosphopantetheine is transferred from CoA to a specific serine of apo-ACP by AcpS. This modification is essential for activity because fatty acids are bound in thioester linkage to the sulfhydryl of the prosthetic group.

Its subcellular location is the cytoplasm. It functions in the pathway lipid metabolism; fatty acid biosynthesis. Functionally, carrier of the growing fatty acid chain in fatty acid biosynthesis. The chain is Acyl carrier protein from Chloroflexus aurantiacus (strain ATCC 29366 / DSM 635 / J-10-fl).